Here is a 235-residue protein sequence, read N- to C-terminus: Protein GrpE (235 aa).

2 stretches are compositionally biased toward basic and acidic residues: residues 1-16 (MENK…HEKN) and 24-35 (NNVKKENLHEDQ). The segment at 1–51 (MENKNQKHNNEFHEKNQQSQKDNNNVKKENLHEDQSDLNDANFDDGGKKNK) is disordered.

It belongs to the GrpE family. In terms of assembly, homodimer.

The protein resides in the cytoplasm. Participates actively in the response to hyperosmotic and heat shock by preventing the aggregation of stress-denatured proteins, in association with DnaK and GrpE. It is the nucleotide exchange factor for DnaK and may function as a thermosensor. Unfolded proteins bind initially to DnaJ; upon interaction with the DnaJ-bound protein, DnaK hydrolyzes its bound ATP, resulting in the formation of a stable complex. GrpE releases ADP from DnaK; ATP binding to DnaK triggers the release of the substrate protein, thus completing the reaction cycle. Several rounds of ATP-dependent interactions between DnaJ, DnaK and GrpE are required for fully efficient folding. This chain is Protein GrpE, found in Malacoplasma penetrans (strain HF-2) (Mycoplasma penetrans).